A 235-amino-acid chain; its full sequence is Probable inactive serine protease 37 (235 aa).

An N-terminal signal peptide occupies residues 1 to 19; that stretch reads MKFIFYLSVLTGTFLFADS. The Peptidase S1 domain maps to 20–233; that stretch reads SVQKEDPAPY…YVSWIENTAK (214 aa). Disulfide bonds link cysteine 40–cysteine 56, cysteine 131–cysteine 198, and cysteine 163–cysteine 177.

The protein belongs to the peptidase S1 family.

It localises to the cytoplasmic vesicle. The protein localises to the secretory vesicle. Its subcellular location is the acrosome. It is found in the secreted. In terms of biological role, plays a role in male fertility. May have a role in sperm migration or binding to zona-intact eggs. Involved in the activation of the proacrosin/acrosin system. This Macaca fascicularis (Crab-eating macaque) protein is Probable inactive serine protease 37.